We begin with the raw amino-acid sequence, 99 residues long: Prostate and testis expressed protein 14 (99 aa).

The signal sequence occupies residues 1-21 (MGKNILLLLLGLSFVIGFLQA). The 78-residue stretch at 22–99 (LRCLECDMLN…CHDQSLCNEF (78 aa)) folds into the UPAR/Ly6 domain. 5 cysteine pairs are disulfide-bonded: C24/C51, C27/C36, C43/C69, C73/C89, and C90/C96. N-linked (GlcNAc...) asparagine glycosylation is present at N40. N75 and N82 each carry an N-linked (GlcNAc...) asparagine glycan.

This sequence belongs to the PATE family. Monomer.

It localises to the secreted. The chain is Prostate and testis expressed protein 14 from Rattus norvegicus (Rat).